The sequence spans 533 residues: Beta-glucosidase 24 (533 aa).

The first 26 residues, 1-26, serve as a signal peptide directing secretion; the sequence is MVLQKLPLMSIGLLWLLIIVGPLVNA. Gln-58 is an a beta-D-glucoside binding site. 2 N-linked (GlcNAc...) asparagine glycosylation sites follow: Asn-64 and Asn-88. A beta-D-glucoside contacts are provided by residues His-161 and 206–207; that span reads NE. The active-site Proton donor is the Glu-207. A disulfide bridge links Cys-226 with Cys-239. A beta-D-glucoside is bound at residue Tyr-355. Asn-388 is a glycosylation site (N-linked (GlcNAc...) asparagine). Glu-427 provides a ligand contact to a beta-D-glucoside. Catalysis depends on Glu-427, which acts as the Nucleophile. N-linked (GlcNAc...) asparagine glycans are attached at residues Asn-437, Asn-442, and Asn-470. Residues Trp-477, 484-485, and Phe-493 each bind a beta-D-glucoside; that span reads EW. N-linked (GlcNAc...) asparagine glycosylation is present at Asn-503. The Prevents secretion from ER motif lies at 530 to 533; it reads KDEL.

Belongs to the glycosyl hydrolase 1 family.

Its subcellular location is the endoplasmic reticulum lumen. The catalysed reaction is Hydrolysis of terminal, non-reducing beta-D-glucosyl residues with release of beta-D-glucose.. This is Beta-glucosidase 24 from Arabidopsis thaliana (Mouse-ear cress).